The sequence spans 558 residues: uncharacterized protein (558 aa).

The 200-residue stretch at 7–206 (SNFIDMLRLG…FACFLEGMLS (200 aa)) folds into the DhaL domain.

This is an uncharacterized protein from Mycoplasma pneumoniae (strain ATCC 29342 / M129 / Subtype 1) (Mycoplasmoides pneumoniae).